The sequence spans 228 residues: 3,4-dihydroxy-2-butanone 4-phosphate synthase (228 aa).

Residues 37-38, Asp-42, 150-154, and Glu-174 each bind D-ribulose 5-phosphate; these read RE and RPGHT. A Mg(2+)-binding site is contributed by Glu-38. His-153 is a binding site for Mg(2+).

This sequence belongs to the DHBP synthase family. Homodimer. Mg(2+) serves as cofactor. It depends on Mn(2+) as a cofactor.

The catalysed reaction is D-ribulose 5-phosphate = (2S)-2-hydroxy-3-oxobutyl phosphate + formate + H(+). It participates in cofactor biosynthesis; riboflavin biosynthesis; 2-hydroxy-3-oxobutyl phosphate from D-ribulose 5-phosphate: step 1/1. Catalyzes the conversion of D-ribulose 5-phosphate to formate and 3,4-dihydroxy-2-butanone 4-phosphate. This is 3,4-dihydroxy-2-butanone 4-phosphate synthase from Chloroherpeton thalassium (strain ATCC 35110 / GB-78).